A 466-amino-acid chain; its full sequence is Asparagine--tRNA ligase (466 aa).

The protein belongs to the class-II aminoacyl-tRNA synthetase family. In terms of assembly, homodimer.

The protein resides in the cytoplasm. The catalysed reaction is tRNA(Asn) + L-asparagine + ATP = L-asparaginyl-tRNA(Asn) + AMP + diphosphate + H(+). The protein is Asparagine--tRNA ligase of Enterobacter sp. (strain 638).